The following is a 175-amino-acid chain: ATP synthase subunit b (175 aa).

A helical membrane pass occupies residues 22 to 42; the sequence is LNLLETNIINIAIVFGLLIFL.

This sequence belongs to the ATPase B chain family. As to quaternary structure, F-type ATPases have 2 components, F(1) - the catalytic core - and F(0) - the membrane proton channel. F(1) has five subunits: alpha(3), beta(3), gamma(1), delta(1), epsilon(1). F(0) has four main subunits: a(1), b(1), b'(1) and c(10-14). The alpha and beta chains form an alternating ring which encloses part of the gamma chain. F(1) is attached to F(0) by a central stalk formed by the gamma and epsilon chains, while a peripheral stalk is formed by the delta, b and b' chains.

Its subcellular location is the cell inner membrane. Functionally, f(1)F(0) ATP synthase produces ATP from ADP in the presence of a proton or sodium gradient. F-type ATPases consist of two structural domains, F(1) containing the extramembraneous catalytic core and F(0) containing the membrane proton channel, linked together by a central stalk and a peripheral stalk. During catalysis, ATP synthesis in the catalytic domain of F(1) is coupled via a rotary mechanism of the central stalk subunits to proton translocation. In terms of biological role, component of the F(0) channel, it forms part of the peripheral stalk, linking F(1) to F(0). In Gloeobacter violaceus (strain ATCC 29082 / PCC 7421), this protein is ATP synthase subunit b.